Reading from the N-terminus, the 224-residue chain is Serum amyloid P-component (224 aa).

An N-terminal signal peptide occupies residues 1–19 (MERLLLWVSVLASLPEAFA). The region spanning 24–224 (TGKVFVFPRE…YVVIKPRVWS (201 aa)) is the Pentraxin (PTX) domain. N51 is a glycosylation site (N-linked (GlcNAc...) asparagine). C55 and C114 are joined by a disulfide. Residues D77, N78, E155, Q156, D157, and Q167 each coordinate Ca(2+).

The protein belongs to the pentraxin family. In terms of assembly, homopentamer. Pentraxin (or pentaxin) have a discoid arrangement of 5 non-covalently bound subunits. Ca(2+) is required as a cofactor.

The protein resides in the secreted. The polypeptide is Serum amyloid P-component (APCS) (Sus scrofa (Pig)).